The sequence spans 366 residues: Beta sliding clamp (366 aa).

Belongs to the beta sliding clamp family. In terms of assembly, forms a ring-shaped head-to-tail homodimer around DNA which binds and tethers DNA polymerases and other proteins to the DNA. The DNA replisome complex has a single clamp-loading complex (3 tau and 1 each of delta, delta', psi and chi subunits) which binds 3 Pol III cores (1 core on the leading strand and 2 on the lagging strand) each with a beta sliding clamp dimer. Additional proteins in the replisome are other copies of gamma, psi and chi, Ssb, DNA helicase and RNA primase.

The protein resides in the cytoplasm. Confers DNA tethering and processivity to DNA polymerases and other proteins. Acts as a clamp, forming a ring around DNA (a reaction catalyzed by the clamp-loading complex) which diffuses in an ATP-independent manner freely and bidirectionally along dsDNA. Initially characterized for its ability to contact the catalytic subunit of DNA polymerase III (Pol III), a complex, multichain enzyme responsible for most of the replicative synthesis in bacteria; Pol III exhibits 3'-5' exonuclease proofreading activity. The beta chain is required for initiation of replication as well as for processivity of DNA replication. The polypeptide is Beta sliding clamp (dnaN) (Buchnera aphidicola subsp. Acyrthosiphon pisum (strain APS) (Acyrthosiphon pisum symbiotic bacterium)).